We begin with the raw amino-acid sequence, 170 residues long: Large ribosomal subunit protein uL22z (170 aa).

The protein belongs to the universal ribosomal protein uL22 family.

This Hordeum vulgare (Barley) protein is Large ribosomal subunit protein uL22z.